The primary structure comprises 283 residues: Lysozyme-like protein 7 (283 aa).

An N-terminal signal peptide occupies residues M1–S18. Residues Y53–A273 form the Ch-type lysozyme domain.

Belongs to the glycosyl hydrolase 25 family. As to expression, expressed in intestine. Expressed in rectal gland cells and head neurons.

Its function is as follows. Plays a role in resistance to Gram-positive bacteria B.thuringiensis and M.nematophilum and Gram-negative bacteria S.boydii or S.flexneri infection and to fungus C.neoformans infection. Plays a role in susceptibility to Gram-negative bacterium S.typhimurium infection. The sequence is that of Lysozyme-like protein 7 from Caenorhabditis elegans.